The primary structure comprises 705 residues: Prolyl endopeptidase (705 aa).

Positions 1–20 (MKYKKLSVAVAAFAFAAVSA) are cleaved as a signal peptide. Catalysis depends on charge relay system residues S556 and H675.

This sequence belongs to the peptidase S9A family. In terms of assembly, monomer.

Its subcellular location is the periplasm. It catalyses the reaction Hydrolysis of Pro-|-Xaa &gt;&gt; Ala-|-Xaa in oligopeptides.. In terms of biological role, cleaves peptide bonds on the C-terminal side of prolyl residues within peptides that are up to approximately 30 amino acids long. Has an absolute requirement for an X-Pro bond in the trans configuration immediately preceding the Pro-Y scissible bond. The polypeptide is Prolyl endopeptidase (Elizabethkingia miricola (Chryseobacterium miricola)).